Consider the following 333-residue polypeptide: Taste receptor type 2 member 123 (333 aa).

At 1–13 (MFSQKINYSHLFT) the chain is on the extracellular side. N-linked (GlcNAc...) asparagine glycosylation is present at asparagine 7. The helical transmembrane segment at 14–34 (FSITLYVEIVTGILGHGFIAL) threads the bilayer. The Cytoplasmic portion of the chain corresponds to 35–60 (VNIMDWVKRRRISSVDQILTALALTR). The helical transmembrane segment at 61–81 (FIYVLSMLICILLFMLCPHLP) threads the bilayer. At 82 to 90 (RRSEMLSAM) the chain is on the extracellular side. The chain crosses the membrane as a helical span at residues 91-111 (GIFWVVNSHFSIWLTTCLGVF). The Cytoplasmic portion of the chain corresponds to 112–134 (YFLKIANFSNSFFLYLKWRVKKV). Residues 135–155 (ILIIILASLIFLTLHILSLGI) traverse the membrane as a helical segment. At 156-205 (YDQFSIAAYVGNMSYSLTDLTQFSSTFLFSNSSNVFLITNSSHVFLPINS) the chain is on the extracellular side. Residues asparagine 167, asparagine 186, and asparagine 195 are each glycosylated (N-linked (GlcNAc...) asparagine). Residues 206-226 (LFMLIPFTVSLVAFLMLIFSL) form a helical membrane-spanning segment. Residues 227–253 (WKHHKKMQVNAKQPRDVSTMAHIKALQ) lie on the Cytoplasmic side of the membrane. The helical transmembrane segment at 254–274 (TVFSFLLLYAIYLLFLIIGIL) threads the bilayer. The Extracellular segment spans residues 275-281 (NLGLMEK). The chain crosses the membrane as a helical span at residues 282-302 (IVILIFDHISGAVFPISHSFV). Residues 303–333 (LILGNSKLRQASLSVLPCLRCQSKDMDTMGL) are Cytoplasmic-facing.

Belongs to the G-protein coupled receptor T2R family. As to expression, expressed in subsets of taste receptor cells of the tongue and palate epithelium and exclusively in gustducin-positive cells. Expressed in the duodenum, antrum and fundus (part of the stomach).

The protein localises to the membrane. In terms of biological role, gustducin-coupled receptor implicated in the perception of bitter compounds in the oral cavity and the gastrointestinal tract. Signals through PLCB2 and the calcium-regulated cation channel TRPM5. The sequence is that of Taste receptor type 2 member 123 (Tas2r123) from Mus musculus (Mouse).